The chain runs to 188 residues: Actin-related protein 2/3 complex subunit 3 (188 aa).

This sequence belongs to the ARPC3 family. As to quaternary structure, component of the Arp2/3 complex.

The protein resides in the cytoplasm. The protein localises to the cytoskeleton. Functions as a component of the Arp2/3 complex which is involved in regulation of actin polymerization and together with an activating nucleation-promoting factor (NPF) mediates the formation of branched actin networks. The polypeptide is Actin-related protein 2/3 complex subunit 3 (Entamoeba histolytica (strain ATCC 30459 / HM-1:IMSS / ABRM)).